The following is a 128-amino-acid chain: Transcription antitermination protein NusB (128 aa).

It belongs to the NusB family.

Its function is as follows. Involved in transcription antitermination. Required for transcription of ribosomal RNA (rRNA) genes. Binds specifically to the boxA antiterminator sequence of the ribosomal RNA (rrn) operons. This is Transcription antitermination protein NusB from Exiguobacterium sp. (strain ATCC BAA-1283 / AT1b).